Consider the following 72-residue polypeptide: Translation initiation factor IF-1 (72 aa).

The S1-like domain occupies 1–72 (MAKDDVIEVE…TRGRITYRYK (72 aa)). A Phosphotyrosine modification is found at Tyr-60.

It belongs to the IF-1 family. Component of the 30S ribosomal translation pre-initiation complex which assembles on the 30S ribosome in the order IF-2 and IF-3, IF-1 and N-formylmethionyl-tRNA(fMet); mRNA recruitment can occur at any time during PIC assembly.

Its subcellular location is the cytoplasm. Its function is as follows. One of the essential components for the initiation of protein synthesis. Stabilizes the binding of IF-2 and IF-3 on the 30S subunit to which N-formylmethionyl-tRNA(fMet) subsequently binds. Helps modulate mRNA selection, yielding the 30S pre-initiation complex (PIC). Upon addition of the 50S ribosomal subunit IF-1, IF-2 and IF-3 are released leaving the mature 70S translation initiation complex. The sequence is that of Translation initiation factor IF-1 from Bacillus licheniformis (strain ATCC 14580 / DSM 13 / JCM 2505 / CCUG 7422 / NBRC 12200 / NCIMB 9375 / NCTC 10341 / NRRL NRS-1264 / Gibson 46).